Consider the following 39-residue polypeptide: Gonadal protein gdl-ORF39 (39 aa).

In bundles of maturing sperm of larval, pupal and adult males.

This Drosophila melanogaster (Fruit fly) protein is Gonadal protein gdl-ORF39 (gdl-ORF39).